The chain runs to 343 residues: Phosphate acyltransferase (343 aa).

It belongs to the PlsX family. Homodimer. Probably interacts with PlsY.

It localises to the cytoplasm. It carries out the reaction a fatty acyl-[ACP] + phosphate = an acyl phosphate + holo-[ACP]. It participates in lipid metabolism; phospholipid metabolism. In terms of biological role, catalyzes the reversible formation of acyl-phosphate (acyl-PO(4)) from acyl-[acyl-carrier-protein] (acyl-ACP). This enzyme utilizes acyl-ACP as fatty acyl donor, but not acyl-CoA. The sequence is that of Phosphate acyltransferase from Limosilactobacillus reuteri (strain DSM 20016) (Lactobacillus reuteri).